Here is a 627-residue protein sequence, read N- to C-terminus: WPP domain-interacting tail-anchored protein 2 (627 aa).

Coiled coils occupy residues 81-152 (CGIL…RRTL), 188-218 (LEKS…KLHY), and 312-542 (TLRE…KILR). The interval 577–597 (SLQEDERTREEPEKQSVSEKS) is disordered. A compositionally biased stretch (basic and acidic residues) spans 580-597 (EDERTREEPEKQSVSEKS). The chain crosses the membrane as a helical span at residues 606-626 (LKHILVVALVFVLFCSFFGVT).

As to quaternary structure, component of Ran complexes at least composed of WIT1 or WIT2, RANGAP1 or RANGAP2, and WIP1 or WIP2 or WIP3. Interacts with KAKU1. Core component of the LINC complex which is composed of inner nuclear membrane SUN domain-containing proteins coupled to outer nuclear membrane WIP and WIT proteins. The LINC complex also involves nucleoskeletal proteins CRWN/LINC and possibly KAKU4 and the cytoskeletal myosin KAKU1. Interacts with WIP1, WIP2 and WIP3. In terms of tissue distribution, ubiquitous.

Its subcellular location is the membrane. Together with WIT1, required for the nuclear envelope docking of RANGAP proteins in root tips. Plays a role in nuclear shape determination. As component of the SUN-WIP-WIT2-KAKU1 complex, mediates the transfer of cytoplasmic forces to the nuclear envelope (NE), leading to nuclear shape changes. In Arabidopsis thaliana (Mouse-ear cress), this protein is WPP domain-interacting tail-anchored protein 2 (WIT2).